Consider the following 45-residue polypeptide: Non-structural protein of 4.8 kDa (45 aa).

This sequence belongs to the coronaviruses ns4/ns4.8 protein family.

The protein is Non-structural protein of 4.8 kDa of Bovine coronavirus (strain OK-0514) (BCoV).